The following is a 168-amino-acid chain: Zinc finger A20 and AN1 domain-containing stress-associated protein 1 (168 aa).

The segment at 13–47 (PSEPKLCVKGCGFFGSPSNMNLCSKCYRDIRATEE) adopts an A20-type zinc-finger fold. Zn(2+) contacts are provided by cysteine 19, cysteine 23, cysteine 35, and cysteine 38. Positions 49 to 105 (TASAKAAVEKSLNPNKPKTQPQQSQEITQGVLGSGSSSSSTRGGDSAAAPLDPPKST) are disordered. Residues 60 to 76 (LNPNKPKTQPQQSQEIT) are compositionally biased toward polar residues. A compositionally biased stretch (low complexity) spans 82-94 (SGSSSSSTRGGDS). The segment at 103–149 (KSTATRCLSCNKKVGVTGFKCRCGSTFCGTHRYPESHECQFDFKGVA) adopts an AN1-type zinc-finger fold. Cysteine 109, cysteine 112, cysteine 123, cysteine 125, cysteine 130, histidine 133, histidine 139, and cysteine 141 together coordinate Zn(2+).

Functionally, may be involved in environmental stress response. The sequence is that of Zinc finger A20 and AN1 domain-containing stress-associated protein 1 (SAP1) from Arabidopsis thaliana (Mouse-ear cress).